The following is a 434-amino-acid chain: Enolase (434 aa).

Position 163 (glutamine 163) interacts with (2R)-2-phosphoglycerate. Residue glutamate 205 is the Proton donor of the active site. Positions 242, 289, and 316 each coordinate Mg(2+). Positions 341, 370, 371, and 392 each coordinate (2R)-2-phosphoglycerate. Lysine 341 (proton acceptor) is an active-site residue.

It belongs to the enolase family. Mg(2+) is required as a cofactor.

The protein localises to the cytoplasm. The protein resides in the secreted. It is found in the cell surface. It catalyses the reaction (2R)-2-phosphoglycerate = phosphoenolpyruvate + H2O. It participates in carbohydrate degradation; glycolysis; pyruvate from D-glyceraldehyde 3-phosphate: step 4/5. Functionally, catalyzes the reversible conversion of 2-phosphoglycerate (2-PG) into phosphoenolpyruvate (PEP). It is essential for the degradation of carbohydrates via glycolysis. This chain is Enolase, found in Lacticaseibacillus casei (strain BL23) (Lactobacillus casei).